We begin with the raw amino-acid sequence, 417 residues long: MNIIDELKWRGALNQATDEEGLRELTEEKKIALYCGTDPSGDSLHIGHLIPFMMLKRFQLAGHKPVILIGGGTGAIGDPSGRKTERDLETRSKLEQNVQSLTKQMIRLFGTENFTIVNNYDWLSKFTMIDFLRDYGKLFNLNTMLNKEVVASRLDAGISFTEFTYQILQAIDFLHLYRHNDVQLQIGGSDQWGNITSGIDLIHKVEGSDTKVFGVTIPLMLKADGTKFGKTAGGAVWLDPEKTSPYEFYQFWLNQDDRDVVKYLKYFTFLSQEEIAGLEEKVQTEPWKREAQRRLAQEVTTFVHGQAATDQAEKISAILFSGNIQDLTTAEVEQAFAGTPSVEVSAEPANIVDWLVDTKIEPSKRQAREDVKNGAIRVNGEKVTDLEATLDPTAKFDGKYVVIRRGKKNYTLAKVHA.

Tyr-34 contacts L-tyrosine. The short motif at 39-48 (PSGDSLHIGH) is the 'HIGH' region element. L-tyrosine contacts are provided by Tyr-165 and Gln-169. Positions 227–231 (KFGKT) match the 'KMSKS' region motif. Lys-230 is a binding site for ATP. In terms of domain architecture, S4 RNA-binding spans 349–415 (ANIVDWLVDT…GKKNYTLAKV (67 aa)).

It belongs to the class-I aminoacyl-tRNA synthetase family. TyrS type 1 subfamily. In terms of assembly, homodimer.

Its subcellular location is the cytoplasm. The enzyme catalyses tRNA(Tyr) + L-tyrosine + ATP = L-tyrosyl-tRNA(Tyr) + AMP + diphosphate + H(+). Its function is as follows. Catalyzes the attachment of tyrosine to tRNA(Tyr) in a two-step reaction: tyrosine is first activated by ATP to form Tyr-AMP and then transferred to the acceptor end of tRNA(Tyr). The sequence is that of Tyrosine--tRNA ligase from Limosilactobacillus fermentum (strain NBRC 3956 / LMG 18251) (Lactobacillus fermentum).